Here is a 1389-residue protein sequence, read N- to C-terminus: DNA-directed RNA polymerase subunit beta'' (1389 aa).

The Zn(2+) site is built by cysteine 224, cysteine 295, cysteine 302, and cysteine 305.

Belongs to the RNA polymerase beta' chain family. RpoC2 subfamily. In plastids the minimal PEP RNA polymerase catalytic core is composed of four subunits: alpha, beta, beta', and beta''. When a (nuclear-encoded) sigma factor is associated with the core the holoenzyme is formed, which can initiate transcription. Zn(2+) is required as a cofactor.

The protein localises to the plastid. The protein resides in the chloroplast. It catalyses the reaction RNA(n) + a ribonucleoside 5'-triphosphate = RNA(n+1) + diphosphate. Its function is as follows. DNA-dependent RNA polymerase catalyzes the transcription of DNA into RNA using the four ribonucleoside triphosphates as substrates. The polypeptide is DNA-directed RNA polymerase subunit beta'' (Atropa belladonna (Belladonna)).